Consider the following 89-residue polypeptide: RNA-binding protein Hfq (89 aa).

Residues 9-68 (DPFLNALRRERVPVSIYLVNGIKLQGQVESFDQFVILLKNTVSQMVYKHAISTVVPARAL) enclose the Sm domain.

This sequence belongs to the Hfq family. Homohexamer.

RNA chaperone that binds small regulatory RNA (sRNAs) and mRNAs to facilitate mRNA translational regulation in response to envelope stress, environmental stress and changes in metabolite concentrations. Also binds with high specificity to tRNAs. The protein is RNA-binding protein Hfq of Shewanella denitrificans (strain OS217 / ATCC BAA-1090 / DSM 15013).